The chain runs to 141 residues: Putative nickel-responsive regulator (141 aa).

The Ni(2+) site is built by H80, H91, H93, and C99.

Belongs to the transcriptional regulatory CopG/NikR family. Requires Ni(2+) as cofactor.

Its function is as follows. Transcriptional regulator. This is Putative nickel-responsive regulator from Methanococcus maripaludis (strain C6 / ATCC BAA-1332).